The sequence spans 517 residues: RNA-binding region-containing protein 3 (517 aa).

The tract at residues 1 to 26 (MAAPEQPLAISRGCTSSSSLSPPRGD) is disordered. Ser21 is subject to Phosphoserine. The 76-residue stretch at 27 to 102 (RTLLVRHLPA…HTLVVEFAKE (76 aa)) folds into the RRM 1 domain. Disordered regions lie at residues 106 to 130 (VHSP…DDKE) and 213 to 254 (MPLH…DEDR). The residue at position 108 (Ser108) is a Phosphoserine. Positions 115–130 (SEKKKRSDDPVEDDKE) are enriched in basic and acidic residues. Residues 217–230 (APLPPTSPQPPEEP) are compositionally biased toward pro residues. The span at 231–252 (PLPEEDEELSSEESEYESTDDE) shows a compositional bias: acidic residues. Residues 420 to 503 (CRIYVKNLAK…KPMVVQFARS (84 aa)) form the RRM 2 domain.

As to quaternary structure, component of the U11/U12 snRNPs that are part of the U12-type spliceosome. Found in a complex with m(7)G-capped U12 snRNA. Interacts with PDCD7.

The protein localises to the nucleus. In terms of biological role, participates in pre-mRNA U12-dependent splicing, performed by the minor spliceosome which removes U12-type introns. U12-type introns comprises less than 1% of all non-coding sequences. Binds to the 3'-stem-loop of m(7)G-capped U12 snRNA. The polypeptide is RNA-binding region-containing protein 3 (RNPC3) (Pongo abelii (Sumatran orangutan)).